A 319-amino-acid polypeptide reads, in one-letter code: Thioredoxin reductase (319 aa).

FAD is bound by residues 11-14 (SGPA), 40-41 (IA), Q45, N54, V87, C145, D288, and 295-297 (RQA). A disulfide bridge connects residues C142 and C145.

Belongs to the class-II pyridine nucleotide-disulfide oxidoreductase family. Homodimer. FAD serves as cofactor.

It is found in the cytoplasm. The enzyme catalyses [thioredoxin]-dithiol + NADP(+) = [thioredoxin]-disulfide + NADPH + H(+). In Yarrowia lipolytica (strain CLIB 122 / E 150) (Yeast), this protein is Thioredoxin reductase (TRR1).